The chain runs to 63 residues: Large ribosomal subunit protein eL24 (63 aa).

Cys7, Cys10, Cys33, and Cys37 together coordinate Zn(2+). Residues 7 to 37 (CSFCGGSIEPGTGLMYVLRNGQILWFCSSKC) form a C4-type zinc finger.

This sequence belongs to the eukaryotic ribosomal protein eL24 family. As to quaternary structure, part of the 50S ribosomal subunit. Forms a cluster with proteins L3 and L14. The cofactor is Zn(2+).

Its function is as follows. Binds to the 23S rRNA. The protein is Large ribosomal subunit protein eL24 of Aeropyrum pernix (strain ATCC 700893 / DSM 11879 / JCM 9820 / NBRC 100138 / K1).